The sequence spans 478 residues: MSSGTLYDKVWDLHRVADLPGGSTQLFVGLHLIHEVTSPQAFAALQDKGLPVRCPERTVATVDHIVPTISQKRPFADPLAEEMLSTLERNCANYGIVLCGLGSGRQGIVHVIAPELGLTQPGMTVACGDSHTSTHGAFGAIAFGIGTSQVRDVLASQSLAMNKLKVRRIWVDGQLGSGVHAKDLILHVIRSLGVKAGVGYAYEFAGPAIDVLSMEERMTLCNMAIEGGARCGYVNPDGVTFDYLQGRFYAPTGEAWHRAVAWWSSLASDPNAVFDDEVMFDAASIAPMVTWGITPGQGIAVDESVPTIDSLEPNERPIAEEACRYMDLEPGMAIEGVPVDVCFIGSCTNGRLSDLKAAAAIAKGRHVAQGIKAFVVPGSEQVARAAEAEGLDGVFRKAGFEWREPGCSMCLAMNPDRLEGRQISASSSNRNFKGRQGSSRGRTLLMSPAMVAAAAITGQVTDVRKLISNTVPSKSFHQ.

Residues C347, C407, and C410 each coordinate [4Fe-4S] cluster.

Belongs to the aconitase/IPM isomerase family. LeuC type 1 subfamily. As to quaternary structure, heterodimer of LeuC and LeuD. [4Fe-4S] cluster is required as a cofactor.

It carries out the reaction (2R,3S)-3-isopropylmalate = (2S)-2-isopropylmalate. It functions in the pathway amino-acid biosynthesis; L-leucine biosynthesis; L-leucine from 3-methyl-2-oxobutanoate: step 2/4. Its function is as follows. Catalyzes the isomerization between 2-isopropylmalate and 3-isopropylmalate, via the formation of 2-isopropylmaleate. The sequence is that of 3-isopropylmalate dehydratase large subunit from Prochlorococcus marinus (strain MIT 9303).